A 382-amino-acid polypeptide reads, in one-letter code: cAMP-dependent protein kinase type I-alpha regulatory subunit (382 aa).

An N-acetylalanine modification is found at Ala-2. The tract at residues 2 to 136 (ATSSSSSSEE…AALAKAIEKN (135 aa)) is dimerization and phosphorylation. The disordered stretch occupies residues 62–96 (TKQLLNQQKSGSRSDSREDEISPPPPMNPVVKGRR). Residues 97–101 (RRGAI) carry the Pseudophosphorylation motif motif. 3',5'-cyclic AMP-binding positions include 138-255 (LFAH…SKVS), Glu-203, Arg-212, 256-382 (ILES…SLSV), Glu-327, and Arg-336.

It belongs to the cAMP-dependent kinase regulatory chain family. The inactive form of the enzyme is composed of two regulatory chains and two catalytic chains. Activation by cAMP produces two active catalytic monomers and a regulatory dimer that binds four cAMP molecules. In terms of processing, the pseudophosphorylation site binds to the substrate-binding region of the catalytic chain but is not phosphorylated. The physiological significance of phosphorylations by other kinases is unclear.

It localises to the cell membrane. The polypeptide is cAMP-dependent protein kinase type I-alpha regulatory subunit (PRKAR1A) (Gallus gallus (Chicken)).